The primary structure comprises 398 residues: DNA replication and repair protein RecF (398 aa).

30 to 37 (GSNGLGKT) is a binding site for ATP.

It belongs to the RecF family.

Its subcellular location is the cytoplasm. In terms of biological role, the RecF protein is involved in DNA metabolism; it is required for DNA replication and normal SOS inducibility. RecF binds preferentially to single-stranded, linear DNA. It also seems to bind ATP. In Renibacterium salmoninarum (strain ATCC 33209 / DSM 20767 / JCM 11484 / NBRC 15589 / NCIMB 2235), this protein is DNA replication and repair protein RecF.